A 424-amino-acid chain; its full sequence is L-glutamine:2-deoxy-scyllo-inosose aminotransferase (424 aa).

K202 carries the N6-(pyridoxal phosphate)lysine modification.

Belongs to the DegT/DnrJ/EryC1 family. L-glutamine:2-deoxy-scyllo-inosose/scyllo-inosose aminotransferase subfamily. Requires pyridoxal 5'-phosphate as cofactor.

The enzyme catalyses 2-deoxy-L-scyllo-inosose + L-glutamine = 2-deoxy-scyllo-inosamine + 2-oxoglutaramate. It catalyses the reaction 3-amino-2,3-dideoxy-scyllo-inosose + L-glutamine = 2-deoxystreptamine + 2-oxoglutaramate. It functions in the pathway metabolic intermediate biosynthesis; 2-deoxystreptamine biosynthesis; 2-deoxystreptamine from D-glucose 6-phosphate: step 2/4. The protein operates within antibiotic biosynthesis; tobramycin biosynthesis. In terms of biological role, catalyzes the PLP-dependent transamination of 2-deoxy-scyllo-inosose (2-DOI) to form 2-deoxy-scyllo-inosamine (2-DOIA) using L-glutamine as the amino donor. Also catalyzes the transamination of 3-amino-2,3-dideoxy-scyllo-inosose (keto-2-DOIA) into 2-deoxystreptamine (2-DOS). This chain is L-glutamine:2-deoxy-scyllo-inosose aminotransferase (tbmB), found in Streptoalloteichus tenebrarius (strain ATCC 17920 / DSM 40477 / JCM 4838 / CBS 697.72 / NBRC 16177 / NCIMB 11028 / NRRL B-12390 / A12253. 1 / ISP 5477) (Streptomyces tenebrarius).